The following is a 279-amino-acid chain: Thymidylate synthase (279 aa).

Position 132-133 (132-133 (RR)) interacts with dUMP. Cys-153 (nucleophile) is an active-site residue. Residues 178–181 (RSND), Asn-189, and 219–221 (HIY) each bind dUMP. Asp-181 is a (6R)-5,10-methylene-5,6,7,8-tetrahydrofolate binding site. Ala-278 lines the (6R)-5,10-methylene-5,6,7,8-tetrahydrofolate pocket.

Belongs to the thymidylate synthase family. Bacterial-type ThyA subfamily. As to quaternary structure, homodimer.

The protein localises to the cytoplasm. The catalysed reaction is dUMP + (6R)-5,10-methylene-5,6,7,8-tetrahydrofolate = 7,8-dihydrofolate + dTMP. It functions in the pathway pyrimidine metabolism; dTTP biosynthesis. Its function is as follows. Catalyzes the reductive methylation of 2'-deoxyuridine-5'-monophosphate (dUMP) to 2'-deoxythymidine-5'-monophosphate (dTMP) while utilizing 5,10-methylenetetrahydrofolate (mTHF) as the methyl donor and reductant in the reaction, yielding dihydrofolate (DHF) as a by-product. This enzymatic reaction provides an intracellular de novo source of dTMP, an essential precursor for DNA biosynthesis. This Lactococcus lactis subsp. lactis (strain IL1403) (Streptococcus lactis) protein is Thymidylate synthase.